A 188-amino-acid chain; its full sequence is Elongation factor P-like protein (188 aa).

This sequence belongs to the elongation factor P family.

The protein is Elongation factor P-like protein of Alcanivorax borkumensis (strain ATCC 700651 / DSM 11573 / NCIMB 13689 / SK2).